The sequence spans 468 residues: 3-isopropylmalate dehydratase large subunit (468 aa).

Residues Cys-349, Cys-409, and Cys-412 each contribute to the [4Fe-4S] cluster site.

Belongs to the aconitase/IPM isomerase family. LeuC type 1 subfamily. Heterodimer of LeuC and LeuD. The cofactor is [4Fe-4S] cluster.

It carries out the reaction (2R,3S)-3-isopropylmalate = (2S)-2-isopropylmalate. Its pathway is amino-acid biosynthesis; L-leucine biosynthesis; L-leucine from 3-methyl-2-oxobutanoate: step 2/4. Catalyzes the isomerization between 2-isopropylmalate and 3-isopropylmalate, via the formation of 2-isopropylmaleate. This chain is 3-isopropylmalate dehydratase large subunit, found in Jannaschia sp. (strain CCS1).